The primary structure comprises 437 residues: ATP-dependent RNA helicase RhlB (437 aa).

The short motif at 9 to 37 (QKFADLGLEPTVLEGLDAQGFHYCTPIQA) is the Q motif element. One can recognise a Helicase ATP-binding domain in the interval 40–219 (LPVVLTGQDI…FEHMNSPESV (180 aa)). 53–60 (AQTGTGKT) lines the ATP pocket. A DEAD box motif is present at residues 165-168 (DEAD). The Helicase C-terminal domain maps to 245–390 (RLLQTLIEEE…LSKYNSEALL (146 aa)). A disordered region spans residues 395–437 (APLRLQRTPRQGGNRRPNGNRQGQGQSRPRNNNRRHPQSQKQQ). A compositionally biased stretch (low complexity) spans 400–424 (QRTPRQGGNRRPNGNRQGQGQSRPR). Positions 425–437 (NNNRRHPQSQKQQ) are enriched in basic residues.

This sequence belongs to the DEAD box helicase family. RhlB subfamily. In terms of assembly, component of the RNA degradosome, which is a multiprotein complex involved in RNA processing and mRNA degradation.

It localises to the cytoplasm. The enzyme catalyses ATP + H2O = ADP + phosphate + H(+). DEAD-box RNA helicase involved in RNA degradation. Has RNA-dependent ATPase activity and unwinds double-stranded RNA. In Photobacterium profundum (strain SS9), this protein is ATP-dependent RNA helicase RhlB.